We begin with the raw amino-acid sequence, 258 residues long: Phosphate import ATP-binding protein PstB (258 aa).

One can recognise an ABC transporter domain in the interval 5–247; that stretch reads LDLKDVNIYY…EKIFSNPTQK (243 aa). 37-44 lines the ATP pocket; that stretch reads GPSGCGKS.

This sequence belongs to the ABC transporter superfamily. Phosphate importer (TC 3.A.1.7) family. The complex is composed of two ATP-binding proteins (PstB), two transmembrane proteins (PstC and PstA) and a solute-binding protein (PstS).

The protein localises to the cell membrane. The catalysed reaction is phosphate(out) + ATP + H2O = ADP + 2 phosphate(in) + H(+). Part of the ABC transporter complex PstSACB involved in phosphate import. Responsible for energy coupling to the transport system. The polypeptide is Phosphate import ATP-binding protein PstB (Rhodococcus jostii (strain RHA1)).